Reading from the N-terminus, the 474-residue chain is MPPNAKSETDAKPEAEPAPASEPAADLESVDQKLEETHHSKFREVDRQEQEVLAEKAAEAASQRIAQVESTTRSATTEAQESTTTAVPVIKKIEHVGEVVTEVIAERTGLPTWGVVAIIILVFLVVFGIIFFCVRRFLKKRRTKDGKGKKGVDMKSVQLLGSAYKEKVQPDMEELTENAEEGDEEDKQSEQKLGRLNFKLEYDFNSNSLAVTVIQAEELPALDMGGTSDPYVKVYLLPDKKKKFETKVHRKTLSPVFNETFTFKSLPYADAMNKTLVFAIFDFDRFSKHDQIGEVKVPLCTIDLAQTIEEWRDLVSVEGEGGQEKLGDICFSLRYVPTAGKLTVVILEAKNLKKMDVGGLSDPYVKIAIMQNGKRLKKKKTSIKKCTLNPYYNESFSFEVPFEQIQKICLVVTVVDYDRIGTSEPIGRCILGCMGTGTELRHWSDMLASPRRPIAQWHTLKDPEETDEILKNMK.

2 disordered regions span residues 1–49 (MPPN…DRQE) and 63–84 (QRIA…ESTT). Over 1–107 (MPPNAKSETD…EVVTEVIAER (107 aa)) the chain is Vesicular. Positions 30-49 (VDQKLEETHHSKFREVDRQE) are enriched in basic and acidic residues. Low complexity predominate over residues 69 to 84 (ESTTRSATTEAQESTT). Residues 108–134 (TGLPTWGVVAIIILVFLVVFGIIFFCV) form a helical membrane-spanning segment. At 135-474 (RRFLKKRRTK…ETDEILKNMK (340 aa)) the chain is on the cytoplasmic side. Residues 170–189 (PDMEELTENAEEGDEEDKQS) are disordered. The span at 171-187 (DMEELTENAEEGDEEDK) shows a compositional bias: acidic residues. The tract at residues 186 to 434 (DKQSEQKLGR…PIGRCILGCM (249 aa)) is phospholipid binding. 2 C2 domains span residues 192–312 (KLGR…EEWR) and 325–458 (KLGD…AQWH). Ca(2+) contacts are provided by leucine 222, aspartate 223, aspartate 229, aspartate 282, phenylalanine 283, aspartate 284, serine 287, lysine 288, aspartate 290, aspartate 356, aspartate 362, aspartate 416, and aspartate 418.

Belongs to the synaptotagmin family. In terms of assembly, homodimer or homotrimer (Potential). Identified in a complex with Syn and nwk. Interacts with StnA and StnB via its second C2 domain. This interaction may mediate its retrieval from the plasma membrane, thereby facilitating the internalization of multiple synaptic vesicles from the plasma membrane. Ca(2+) serves as cofactor.

The protein resides in the cytoplasmic vesicle. It localises to the secretory vesicle. It is found in the synaptic vesicle membrane. Its subcellular location is the synapse. In terms of biological role, may have a regulatory role in the membrane interactions during trafficking of synaptic vesicles at the active zone of the synapse. It binds acidic phospholipids with a specificity that requires the presence of both an acidic head group and a diacyl backbone. This is Synaptotagmin 1 (Syt1) from Drosophila melanogaster (Fruit fly).